The chain runs to 823 residues: ATM interactor (823 aa).

Residues 28–67 (GAAAAASGPWVPPGPRLRGSRPRPAGATQQPAVPAPPAGE) form a disordered region. Low complexity predominate over residues 49–59 (PRPAGATQQPA). A C2H2-type 1 zinc finger spans residues 84 to 109 (ILCTVRGCGKILPNSPALNMHLVKSH). The segment at 165-184 (HKCSKCSNSYGTEWDLKRHA) adopts a C2H2-type 2; degenerate zinc-finger fold. Positions 214–225 (HEIPAEHRDPPS) are enriched in basic and acidic residues. Disordered regions lie at residues 214-234 (HEIP…ENCA), 268-289 (EPSF…TPPR), and 610-634 (RSLL…NPGI). A required for formation of RAD51 foci region spans residues 223–442 (PPSKKRKMEN…ADSSVSSCSQ (220 aa)). 2 stretches are compositionally biased toward polar residues: residues 275–286 (CGSNTDKQTLTT) and 613–629 (LSDT…SGPA).

In terms of assembly, interacts via its C-terminus with ATM. Interacts with DYNLL1; this interaction inhibits ATMIN transcriptional activity and hence may play a role in a feedback loop whereby DYNLL1 inhibits transactivation of its own promoter by ATMIN. In terms of tissue distribution, ubiquitously expressed in normal tissues and cancer cell lines with highest levels in placenta and skeletal muscle.

The protein localises to the nucleus. In terms of biological role, transcription factor. Plays a crucial role in cell survival and RAD51 foci formation in response to methylating DNA damage. Involved in regulating the activity of ATM in the absence of DNA damage. May play a role in stabilizing ATM. Binds to the DYNLL1 promoter and activates its transcription. The polypeptide is ATM interactor (ATMIN) (Homo sapiens (Human)).